The following is a 418-amino-acid chain: Peptide chain release factor subunit 1 (418 aa).

Belongs to the eukaryotic release factor 1 family. As to quaternary structure, heterodimer of two subunits, one of which binds GTP.

The protein localises to the cytoplasm. Directs the termination of nascent peptide synthesis (translation) in response to the termination codons UAA, UAG and UGA. This chain is Peptide chain release factor subunit 1, found in Haloarcula marismortui (strain ATCC 43049 / DSM 3752 / JCM 8966 / VKM B-1809) (Halobacterium marismortui).